Consider the following 369-residue polypeptide: 2-aminoethylphosphonate--pyruvate transaminase (369 aa).

Lys193 is modified (N6-(pyridoxal phosphate)lysine).

It belongs to the class-V pyridoxal-phosphate-dependent aminotransferase family. PhnW subfamily. In terms of assembly, homodimer. Requires pyridoxal 5'-phosphate as cofactor.

It catalyses the reaction (2-aminoethyl)phosphonate + pyruvate = phosphonoacetaldehyde + L-alanine. Its function is as follows. Involved in phosphonate degradation. This is 2-aminoethylphosphonate--pyruvate transaminase from Burkholderia mallei (strain NCTC 10247).